We begin with the raw amino-acid sequence, 253 residues long: ATP synthase subunit b 1 (253 aa).

Residues 5 to 27 (GWTVALQAVNFLILVLLLRHFLY) form a helical membrane-spanning segment.

This sequence belongs to the ATPase B chain family. In terms of assembly, F-type ATPases have 2 components, F(1) - the catalytic core - and F(0) - the membrane proton channel. F(1) has five subunits: alpha(3), beta(3), gamma(1), delta(1), epsilon(1). F(0) has three main subunits: a(1), b(2) and c(10-14). The alpha and beta chains form an alternating ring which encloses part of the gamma chain. F(1) is attached to F(0) by a central stalk formed by the gamma and epsilon chains, while a peripheral stalk is formed by the delta and b chains.

Its subcellular location is the cell inner membrane. Functionally, f(1)F(0) ATP synthase produces ATP from ADP in the presence of a proton or sodium gradient. F-type ATPases consist of two structural domains, F(1) containing the extramembraneous catalytic core and F(0) containing the membrane proton channel, linked together by a central stalk and a peripheral stalk. During catalysis, ATP synthesis in the catalytic domain of F(1) is coupled via a rotary mechanism of the central stalk subunits to proton translocation. Its function is as follows. Component of the F(0) channel, it forms part of the peripheral stalk, linking F(1) to F(0). The chain is ATP synthase subunit b 1 from Rhodospirillum centenum (strain ATCC 51521 / SW).